Reading from the N-terminus, the 167-residue chain is MAAAGAFRLRRAASALLLRSPRLPARELSAPARLYHKKVVDHYENPRNVGSLDKTSKNVGTGLVGAPACGDVMKLQIQVDEKGKIVDARFKTFGCGSAIASSSLATEWVKGKTVEEALTIKNTDIAKELCLPPVKLHCSMLAEDAIKAALADYKLKQEPKKGEAEKK.

The transit peptide at 1-34 (MAAAGAFRLRRAASALLLRSPRLPARELSAPARL) directs the protein to the mitochondrion. Ser-14 is modified (phosphoserine; by MTOR). Zn(2+) is bound at residue Pro-46. Cys-69 (cysteine persulfide intermediate) is an active-site residue. Cys-69 carries the cysteine persulfide modification. Positions 70, 71, 95, 112, and 138 each coordinate Zn(2+). The active-site Cysteine persulfide intermediate is Cys-138. Position 138 is a cysteine persulfide (Cys-138).

This sequence belongs to the NifU family. As to quaternary structure, homodimer; Tyr-35-mediated dimerization of two iron- and sulfide-containing ISCU subunit bind to the cysteine desulfurase complex. Component of the mitochondrial core iron-sulfur cluster (ISC) complex composed of NFS1, LYRM4, NDUFAB1, ISCU, FXN, and FDX2; this complex is an heterohexamer containing two copies of each monomer. Interacts (D-state) with NFS1 (homodimer form); each monomer interacts with the C-terminal regions of each NFS1 monomer. Interacts (monomer form) with FXN (via ferrous form); the interaction is possible when both are bound to the dimeric form of the cysteine desulfurase complex (NFS1:LYRM4) and enhances FXN interaction to the dimeric form of the cysteine desulfurase complex (NFS1:LYRM4). Interacts with GLRX5. Interacts (D-state) with HSPA9. Interacts (S-state) with HSCB; this interaction stimulates the ATPase activity of HSPA9. In terms of assembly, component of the cytoplasmic core iron-sulfur cluster (ISC) complex composed at least of NFS1, LYRM4, and ISCU; this complex interacts with FXN. Monomer; each monomer binds to the C-terminal regions of NFS1 (cytoplasmic and homodimer form). Interacts with NFS1 (cytoplasmic and homodimer form); this interaction promotes de novo iron-sulfur cluster formation. Interacts with HSCB (cytoplasmic form); this interaction stabilizes the (Fe-S) clusters on ISCU. Phosphorylation at Ser-14 is required for ISCU protein stabilization in the cytosol, whereas dephosphorylation of Ser-14, due to the inhibition of mTORC1 (mammalian target of rapamycin complex 1) complex, leads to degradation of the precursor form and ultimately to a decrease in the mitochondrial mature form. In terms of processing, cysteine persulfide is reduced by thiol-containing molecules such as glutathione and L-cysteine. In terms of tissue distribution, detected in heart, liver, skeletal muscle, brain, pancreas, kidney, lung and placenta.

The protein localises to the mitochondrion. Its subcellular location is the cytoplasm. It localises to the nucleus. Its function is as follows. Mitochondrial scaffold protein, of the core iron-sulfur cluster (ISC) assembly complex, that provides the structural architecture on which the [2Fe-2S] clusters are assembled. The core iron-sulfur cluster (ISC) assembly complex is involved in the de novo synthesis of a [2Fe-2S] cluster, the first step of the mitochondrial iron-sulfur protein biogenesis. This process is initiated by the cysteine desulfurase complex (NFS1:LYRM4:NDUFAB1) that produces persulfide which is delivered on the scaffold protein ISCU in a FXN-dependent manner. Then this complex is stabilized by FDX2 which provides reducing equivalents to accomplish the [2Fe-2S] cluster assembly. Finally, the [2Fe-2S] cluster is transferred from ISCU to chaperone proteins, including HSCB, HSPA9 and GLRX5. Exists as two slow interchanging conformational states, a structured (S) and disordered (D) form. May modulate NFS1 desulfurase activity in a zinc-dependent manner. Modulates the interaction between FXN and the cysteine desulfurase complex. Functionally, cytoplasmic scaffold protein, of the cytoplasmic core iron-sulfur cluster (ISC) assembly complex that provides the structural architecture on which the Fe-S clusters are assembled and may be involved in the cytoplasmic iron-sulfur protein biogenesis. The sequence is that of Iron-sulfur cluster assembly enzyme ISCU from Homo sapiens (Human).